The following is a 156-amino-acid chain: ATP synthase subunit b (156 aa).

The helical transmembrane segment at 7-29 (LFGQTVAFILFVWFCMKFVWPPL) threads the bilayer.

It belongs to the ATPase B chain family. In terms of assembly, F-type ATPases have 2 components, F(1) - the catalytic core - and F(0) - the membrane proton channel. F(1) has five subunits: alpha(3), beta(3), gamma(1), delta(1), epsilon(1). F(0) has three main subunits: a(1), b(2) and c(10-14). The alpha and beta chains form an alternating ring which encloses part of the gamma chain. F(1) is attached to F(0) by a central stalk formed by the gamma and epsilon chains, while a peripheral stalk is formed by the delta and b chains.

Its subcellular location is the cell inner membrane. In terms of biological role, f(1)F(0) ATP synthase produces ATP from ADP in the presence of a proton or sodium gradient. F-type ATPases consist of two structural domains, F(1) containing the extramembraneous catalytic core and F(0) containing the membrane proton channel, linked together by a central stalk and a peripheral stalk. During catalysis, ATP synthesis in the catalytic domain of F(1) is coupled via a rotary mechanism of the central stalk subunits to proton translocation. Its function is as follows. Component of the F(0) channel, it forms part of the peripheral stalk, linking F(1) to F(0). This chain is ATP synthase subunit b, found in Shewanella frigidimarina (strain NCIMB 400).